Reading from the N-terminus, the 1715-residue chain is Neurexin-2 (1715 aa).

Positions Met-1–Leu-29 are cleaved as a signal peptide. The Laminin G-like 1 domain maps to Glu-30 to Cys-206. Residues Glu-30 to Thr-1639 are Extracellular-facing. Asn-60 carries N-linked (GlcNAc...) asparagine glycosylation. The region spanning Ala-202–Ser-242 is the EGF-like 1 domain. 3 disulfides stabilise this stretch: Cys-206/Cys-219, Cys-213/Cys-229, and Cys-231/Cys-241. Laminin G-like domains lie at Val-289 to Cys-486 and Asp-493 to Cys-686. Ca(2+) is bound at residue Asp-335. N-linked (GlcNAc...) asparagine glycosylation occurs at Asn-338. Positions 352 and 420 each coordinate Ca(2+). Intrachain disulfides connect Cys-450–Cys-486, Cys-657–Cys-686, Cys-694–Cys-705, Cys-699–Cys-714, and Cys-716–Cys-726. Residues Thr-690–Glu-727 enclose the EGF-like 2 domain. Laminin G-like domains lie at Val-732 to Cys-907 and Asp-921 to Cys-1096. Ca(2+) is bound by residues Asp-779 and Leu-796. Residue Asn-844 is glycosylated (N-linked (GlcNAc...) asparagine). Position 857 (Arg-857) interacts with Ca(2+). Cystine bridges form between Cys-1068–Cys-1096, Cys-1103–Cys-1114, Cys-1108–Cys-1123, and Cys-1125–Cys-1135. Residues Pro-1099–Asn-1136 form the EGF-like 3 domain. Residues Thr-1140–Ser-1348 enclose the Laminin G-like 6 domain. Ca(2+) is bound by residues Asp-1192 and Val-1209. Asn-1239 is a glycosylation site (N-linked (GlcNAc...) asparagine). Ca(2+) is bound by residues Ile-1291 and Asn-1293. Residue Ser-1403 is glycosylated (O-linked (Xyl...) (heparan sulfate) serine). Disordered stretches follow at residues Ala-1461–Thr-1511, Leu-1529–Ala-1549, and Leu-1583–Pro-1626. The chain crosses the membrane as a helical span at residues Gly-1640–Met-1660. Over Tyr-1661–Val-1715 the chain is Cytoplasmic. The tract at residues Asn-1682–Val-1715 is disordered.

This sequence belongs to the neurexin family. The laminin G-like domain 1 binds to NXPH1. Interacts with PATJ. Interacts with CBLN1, CBLN2 and, less avidly, with CBLN4. Specific isoforms bind neuroligins NLGN1, NLGN2 and NLGN3. Isoform 5c/alpha-2C binds to alpha-dystroglycan. Interacts (via Laminin G-like 1 domain) with IGSF21 (Ig-like 1 domain) in a trans-interaction manner. Interacts with CLSTN3. Post-translationally, O-glycosylated; contains heparan sulfate. Heparan sulfate attachment is required for synapse development by mediating interactions with neuroligins. As to expression, brain (neuronal synapse).

It is found in the presynaptic cell membrane. Neuronal cell surface protein that may be involved in cell recognition and cell adhesion. May mediate intracellular signaling. This Rattus norvegicus (Rat) protein is Neurexin-2 (Nrxn2).